Consider the following 170-residue polypeptide: Acetyl-CoA decarbonylase/synthase complex subunit epsilon 1 (170 aa).

This sequence belongs to the CdhB family. In terms of assembly, heterotetramer of two alpha and two epsilon subunits. The ACDS complex is made up of alpha, epsilon, beta, gamma and delta subunits with a probable stoichiometry of (alpha(2)epsilon(2))(4)-beta(8)-(gamma(1)delta(1))(8).

Its pathway is one-carbon metabolism; methanogenesis from acetate. In terms of biological role, part of a complex that catalyzes the reversible cleavage of acetyl-CoA, allowing growth on acetate as sole source of carbon and energy. The alpha-epsilon subcomponent functions as a carbon monoxide dehydrogenase. The precise role of the epsilon subunit is unclear; it may have a stabilizing role within the alpha(2)epsilon(2) component and/or be involved in electron transfer to FAD during a potential FAD-mediated CO oxidation. In Methanosarcina barkeri (strain Fusaro / DSM 804), this protein is Acetyl-CoA decarbonylase/synthase complex subunit epsilon 1.